The chain runs to 179 residues: Small ribosomal subunit protein uS5 (179 aa).

The 64-residue stretch at 13–76 folds into the S5 DRBM domain; the sequence is LDERVVLINR…EAAKRNLIRV (64 aa). The disordered stretch occupies residues 160 to 179; the sequence is DMTPQELNARRMRRETTEAA.

Belongs to the universal ribosomal protein uS5 family. Part of the 30S ribosomal subunit. Contacts proteins S4 and S8.

Functionally, with S4 and S12 plays an important role in translational accuracy. Located at the back of the 30S subunit body where it stabilizes the conformation of the head with respect to the body. The protein is Small ribosomal subunit protein uS5 of Chloroflexus aggregans (strain MD-66 / DSM 9485).